A 497-amino-acid polypeptide reads, in one-letter code: Cytochrome P450 monooxygenase 151 (497 aa).

The chain crosses the membrane as a helical span at residues 1–21 (MTDLVPVYYAFAGVVAALLFY). Asparagine 292 and asparagine 397 each carry an N-linked (GlcNAc...) asparagine glycan. Heme is bound at residue cysteine 441.

Belongs to the cytochrome P450 family. Heme is required as a cofactor.

It is found in the membrane. It participates in secondary metabolite biosynthesis. Its function is as follows. Cytochrome P450 monooxygenase that is able to use dehydroabietic acid and testosterone as substrates for oxidation, suggesting that the natural substrate(s) may be structurally related to steroid compounds. The sequence is that of Cytochrome P450 monooxygenase 151 from Postia placenta (strain ATCC 44394 / Madison 698-R) (Brown rot fungus).